A 362-amino-acid chain; its full sequence is Probable endopolygalacturonase II (362 aa).

Positions 1–20 (MHSFASLLAYGLAAGATLAS) are cleaved as a signal peptide. The propeptide occupies 21-27 (ASPIEAR). The cysteines at positions 30 and 45 are disulfide-linked. The stretch at 156-186 (SDDITLTDITINNADGDSLGGHNTDAFDVGN) is one PbH1 1 repeat. Aspartate 201 serves as the catalytic Proton donor. Cysteine 203 and cysteine 219 form a disulfide bridge. 4 PbH1 repeats span residues 209–229 (GENI…SIGS), 238–259 (VKNV…RIKT), 267–289 (VSEI…VIQQ), and 301–322 (TNGV…DSKA). Histidine 223 is a catalytic residue. Asparagine 240 carries an N-linked (GlcNAc...) asparagine glycan. Disulfide bonds link cysteine 329-cysteine 334 and cysteine 353-cysteine 362.

This sequence belongs to the glycosyl hydrolase 28 family.

It localises to the secreted. The enzyme catalyses (1,4-alpha-D-galacturonosyl)n+m + H2O = (1,4-alpha-D-galacturonosyl)n + (1,4-alpha-D-galacturonosyl)m.. Its function is as follows. Involved in maceration and soft-rotting of plant tissue. Hydrolyzes the 1,4-alpha glycosidic bonds of de-esterified pectate in the smooth region of the plant cell wall. In Aspergillus kawachii (strain NBRC 4308) (White koji mold), this protein is Probable endopolygalacturonase II (pgaII).